We begin with the raw amino-acid sequence, 255 residues long: Small ribosomal subunit protein eS1B (255 aa).

An N-acetylalanine; partial modification is found at Ala-2. Position 245 is a phosphoserine (Ser-245). Residue Lys-248 forms a Glycyl lysine isopeptide (Lys-Gly) (interchain with G-Cter in ubiquitin) linkage. Phosphothreonine is present on Thr-254.

The protein belongs to the eukaryotic ribosomal protein eS1 family. Component of the small ribosomal subunit. Mature ribosomes consist of a small (40S) and a large (60S) subunit. The 40S subunit contains about 33 different proteins and 1 molecule of RNA (18S). The 60S subunit contains about 49 different proteins and 3 molecules of RNA (25S, 5.8S and 5S).

The protein resides in the cytoplasm. The sequence is that of Small ribosomal subunit protein eS1B from Saccharomyces cerevisiae (strain JAY291) (Baker's yeast).